The chain runs to 323 residues: Trihelix transcription factor GT-3a (323 aa).

Residues 1 to 20 show a composition bias toward basic residues; sequence MDRRNPFQHHHHHHQLHHHL. The tract at residues 1–51 is disordered; sequence MDRRNPFQHHHHHHQLHHHLIQQQQLPPPPLSTTATMDPGGGGGGGERIPQ. The 57-residue stretch at 52-108 folds into the Myb-like domain; the sequence is WSIEETKELLAIREELDQTFMETKRNKLLWEVVAAKMADKGFVRSAEQCKSKWKNLV. Disordered stretches follow at residues 147–176, 190–220, and 269–297; these read EATE…EPNQ, KRET…GTKA, and ELEE…ARAQ. Acidic residues predominate over residues 164–176; that stretch reads SDDEEEEVDEPNQ.

As to quaternary structure, homodimer. Heterodimer with GT-3B. As to expression, predominantly expressed in roots and flower buds.

It localises to the nucleus. Functionally, probable transcription factor that binds specifically to the core DNA sequence 5'-GTTAC-3'. This is Trihelix transcription factor GT-3a (GT-3A) from Arabidopsis thaliana (Mouse-ear cress).